Consider the following 234-residue polypeptide: Interleukin-27 subunit alpha (234 aa).

An N-terminal signal peptide occupies residues 1–28 (MGQVTGDLGWRLSLLLLPLLLVQAGSWG). N-linked (GlcNAc...) asparagine glycosylation occurs at Asn-85. A disordered region spans residues 160–185 (KEEEDKEEEEEEEEEEKKLPLGALGG). The segment covering 161–174 (EEEDKEEEEEEEEE) has biased composition (acidic residues).

This sequence belongs to the IL-6 superfamily. Heterodimer with EBI3; not disulfide-linked. This heterodimer is known as interleukin IL-27. In terms of processing, O-glycosylated. Expressed in macrophages and dendritic cells.

The protein localises to the secreted. In terms of biological role, associates with EBI3 to form the IL-27 interleukin, a heterodimeric cytokine which functions in innate immunity. IL-27 has pro- and anti-inflammatory properties, that can regulate T-helper cell development, suppress T-cell proliferation, stimulate cytotoxic T-cell activity, induce isotype switching in B-cells, and that has diverse effects on innate immune cells. Among its target cells are CD4 T-helper cells which can differentiate in type 1 effector cells (TH1), type 2 effector cells (TH2) and IL17 producing helper T-cells (TH17). It drives rapid clonal expansion of naive but not memory CD4 T-cells. It also strongly synergizes with IL-12 to trigger interferon-gamma/IFN-gamma production of naive CD4 T-cells, binds to the cytokine receptor WSX-1/TCCR which appears to be required but not sufficient for IL-27-mediated signal transduction. IL-27 potentiate the early phase of TH1 response and suppress TH2 and TH17 differentiation. It induces the differentiation of TH1 cells via two distinct pathways, p38 MAPK/TBX21- and ICAM1/ITGAL/ERK-dependent pathways. It also induces STAT1, STAT3, STAT4 and STAT5 phosphorylation and activates TBX21/T-Bet via STAT1 with resulting IL12RB2 up-regulation, an event crucial to TH1 cell commitment. It suppresses the expression of GATA3, the inhibitor TH1 cells development. In CD8 T-cells, it activates STATs as well as GZMB. IL-27 reveals to be a potent inhibitor of TH17 cell development and of IL-17 production. Indeed IL27 alone is also able to inhibit the production of IL17 by CD4 and CD8 T-cells. While IL-27 suppressed the development of pro-inflammatory Th17 cells via STAT1, it inhibits the development of anti-inflammatory inducible regulatory T-cells, iTreg, independently of STAT1. IL-27 also has an effect on cytokine production, it suppresses pro-inflammatory cytokine production such as IL2, IL4, IL5 and IL6 and activates suppressors of cytokine signaling such as SOCS1 and SOCS3. Apart from suppression of cytokine production, IL-27 also antagonizes the effects of some cytokines such as IL6 through direct effects on T-cells. Another important role of IL-27 is its antitumor activity as well as its antiangiogenic activity with activation of production of antiangiogenic chemokines such as IP-10/CXCL10 and MIG/CXCL9. The protein is Interleukin-27 subunit alpha (Il27) of Mus musculus (Mouse).